An 876-amino-acid chain; its full sequence is MASDASHALEAALEQMDGIIAGTKTGADLSDGTCEPGLASPASYMNPFPVLHLIEDLRLALEMLELPQERAALLSQIPGPTAAYIKEWFEESLSQVNHHSAASNETYQERLARLEGDKESLILQVSVLTDQVEAQGEKIRDLEVCLEGHQVKLNAAEEMLQQELLSRTSLETQKLDLMTEVSELKLKLVGMEKEQREQEEKQRKAEELLQELRHLKIKVEELENERNQYEWKLKATKAEVAQLQEQVALKDAEIERLHSQLSRTAALHSESHTERDQEIQRLKMGMETLLLANEDKDRRIEELTGLLNQYRKVKEIVMVTQGPSERTLSINEEEPEGGFSKWNATNKDPEELFKQEMPPRCSSPTVGPPPLPQKSLETRAQKKLSCSLEDLRSESVDKCMDGNQPFPVLEPKDSPFLAEHKYPTLPGKLSGATPNGEAAKSPPTICQPDATGSSLLRLRDTESGWDDTAVVNDLSSTSSGTESGPQSPLTPDGKRNPKGIKKFWGKIRRTQSGNFYTDTLGMAEFRRGGLRATAGPRLSRTRDSKGQKSDANAPFAQWSTERVCAWLEDFGLAQYVIFARQWVSSGHTLLTATPQDMEKELGIKHPLHRKKLVLAVKAINTKQEEKSALLDHIWVTRWLDDIGLPQYKDQFHESRVDRRMLQYLTVNDLLFLKVTSQLHHLSIKCAIHVLHVNKFNPHCLHRRPADESNLSPSEVVQWSNHRVMEWLRSVDLAEYAPNLRGSGVHGGLIILEPRFTGDTLAMLLNIPPQKTLLRRHLTTKFNALIGPEAEQEKREKMASPAYTPLTTTAKVRPRKLGFSHFGNIRKKKFDESTDYICPMEPSDGVSDSHRVYSGYRGLSPLDAPELDGLDQVGQIS.

A coiled-coil region spans residues 101–313; that stretch reads AASNETYQER…TGLLNQYRKV (213 aa). Phosphoserine occurs at positions 329, 363, and 387. The interval 356–376 is disordered; that stretch reads EMPPRCSSPTVGPPPLPQKSL. Disordered regions lie at residues 425–451 and 470–500; these read LPGK…PDAT and VVND…PKGI. The span at 473-489 shows a compositional bias: polar residues; the sequence is DLSSTSSGTESGPQSPL. A Phosphoserine modification is found at S512. Residues 527–553 are disordered; the sequence is RGGLRATAGPRLSRTRDSKGQKSDANA. 3 consecutive SAM domains span residues 558 to 622, 630 to 693, and 718 to 783; these read WSTE…INTK, LDHI…LHVN, and WSNH…KFNA.

This sequence belongs to the liprin family. Liprin-beta subfamily. In terms of assembly, forms homodimers and heterodimers. Widely expressed.

In terms of biological role, may regulate the disassembly of focal adhesions. Did not bind receptor-like tyrosine phosphatases type 2A. In Homo sapiens (Human), this protein is Liprin-beta-2 (PPFIBP2).